The following is an 809-amino-acid chain: Lethal factor (809 aa).

The first 33 residues, 1-33 (MNIKKEFIKVISMSCLVTAITLSGPVFIPLVQG), serve as a signal peptide directing secretion. The tract at residues 39 to 66 (DVGMHVKEKEKNKDENKRKDEERNKTQE) is disordered. Residues 40–66 (VGMHVKEKEKNKDENKRKDEERNKTQE) are compositionally biased toward basic and acidic residues. Residues 60-295 (ERNKTQEEHL…NLSLEELKDQ (236 aa)) are i; PA-binding region. One can recognise an ATLF-like 1 domain in the interval 70–282 (KEIMKHIVKI…AFNYMDKFNE (213 aa)). Positions 296 to 330 (RMLARYEKWEKIKQHYQHWSDSLSEEGRGLLKKLQ) are IIA. A run of 5 repeats spans residues 315–333 (SDSL…QIPI), 342–357 (HSLS…RIQI), 360–378 (SDFL…QIDI), 380–397 (DSLS…QVDS), and 399–416 (NPLS…KLDI). The 5 X approximate repeats stretch occupies residues 315–416 (SDSLSEEGRG…EFLKKLKLDI (102 aa)). Positions 336 to 416 (KKDDIIHSLS…EFLKKLKLDI (81 aa)) are III. The segment at 420–583 (DINQRLQDTG…EYIRIDAKVV (164 aa)) is IIB. Residues 585 to 809 (KSKIDTKIQE…NDQIKFIINS (225 aa)) are IV. One can recognise an ATLF-like 2 domain in the interval 609–804 (LPKYTKLITF…TFQFINDQIK (196 aa)). H719 provides a ligand contact to Zn(2+). Residue E720 is the Proton acceptor of the active site. H723, Y761, and E768 together coordinate Zn(2+).

It belongs to the peptidase M34 family. As to quaternary structure, interacts (via ATLF domain 1) with the cleaved form of protective antigen (PA-63) anthrax toxin; interaction is required for LF translocation into the host cytoplasm. Interacts with PA-63 homooligomers (either homoheptamers or homooctamers): three molecules of LF bind the PA-63 homoheptamer to form the PA(7)LF(3) complex, in which the relative position of the N-terminal alpha-helices in the three LFs determines which factor is translocated first. Requires Zn(2+) as cofactor.

It is found in the secreted. Its subcellular location is the host cytoplasm. The protein localises to the host cytosol. It carries out the reaction Preferred amino acids around the cleavage site can be denoted BBBBxHx-|-H, in which B denotes Arg or Lys, H denotes a hydrophobic amino acid, and x is any amino acid. The only known protein substrates are mitogen-activated protein (MAP) kinase kinases.. Inhibited by NSC-12155 (1,3-Bis(2-methyl-4-aminoquinoline-6-yl)ure). Inhibited by phenoxyacetic acid bearing alpha-benzyl substituents on the C2-side chain. Inhibited by sulfonamide hydroxamate with benzylic additions at the sulfonamide nitrogen. Also inhibited by sulfonamide hydroxamates with alkylation at the sulfonamide nitrogen. Inhibited by hydroxamic acid inhibitors. Its function is as follows. Lethal factor (LF), which constitutes one of the three proteins composing the anthrax toxin, is able to trigger rapid cell death in macrophages. Acts as a protease that cleaves the N-terminal of most dual specificity mitogen-activated protein kinase kinases (MAPKKs or MAP2Ks) (except for MAP2K5): cleavage invariably occurs within the N-terminal proline-rich region preceding the kinase domain, thus disrupting a sequence involved in directing specific protein-protein interactions necessary for the assembly of signaling complexes. Also cleaves mouse Nlrp1b: host Nlrp1b cleavage promotes ubiquitination and degradation of the N-terminal part of Nlrp1b by the proteasome, thereby releasing the cleaved C-terminal part of Nlrp1b, which polymerizes and forms the Nlrp1b inflammasome followed by host cell pyroptosis. Able to cleave mouse Nlrp1b alleles 1 and 5, while it is not able to cleave Nlrp1b alleles 2, 3 and 4. In contrast, does not cleave NLRP1 human ortholog. LF is not toxic by itself and only acts as a lethal factor when associated with protective antigen (PA) to form the lethal toxin (LeTx): PA is required for LF translocation into the host cytosol. In Bacillus anthracis, this protein is Lethal factor.